Reading from the N-terminus, the 393-residue chain is Acetate kinase (393 aa).

Asn-6 is a binding site for Mg(2+). An ATP-binding site is contributed by Lys-13. Arg-87 lines the substrate pocket. The Proton donor/acceptor role is filled by Asp-143. Residues 203–207, 278–280, and 326–330 each bind ATP; these read HLGNG, DMR, and GIGEN. Glu-380 is a Mg(2+) binding site.

This sequence belongs to the acetokinase family. As to quaternary structure, homodimer. Mg(2+) serves as cofactor. It depends on Mn(2+) as a cofactor.

Its subcellular location is the cytoplasm. It catalyses the reaction acetate + ATP = acetyl phosphate + ADP. The protein operates within metabolic intermediate biosynthesis; acetyl-CoA biosynthesis; acetyl-CoA from acetate: step 1/2. In terms of biological role, catalyzes the formation of acetyl phosphate from acetate and ATP. Can also catalyze the reverse reaction. In Mycoplasma mycoides subsp. mycoides SC (strain CCUG 32753 / NCTC 10114 / PG1), this protein is Acetate kinase.